We begin with the raw amino-acid sequence, 264 residues long: MKNYSSLLIGGKKFSSRLMVGTGKYKSTQDMIESLSNSETEIITVAVRRIKNDETGENLLEKINWKKYWMLPNTAGCVNSDEAVRIAILGRELAKLSGQEENNFVKLEVIPDKKYLLPDPMETLKAAEILIKKGFSVLPYINADPILAKRLEEIGCATVMPLGSPIGSGQGLLNLSNIGIIIESAKVPVIIDAGIGVPSEASQAMELGADGVLINSAIAQAENPPLMAQAINYGVKAGRQAFLAGRIKKQDFATASSPEKNISI.

Catalysis depends on Lys-106, which acts as the Schiff-base intermediate with DXP. 1-deoxy-D-xylulose 5-phosphate contacts are provided by residues Gly-167, 193-194 (AG), and 215-216 (NS).

Belongs to the ThiG family. As to quaternary structure, homotetramer. Forms heterodimers with either ThiH or ThiS.

The protein localises to the cytoplasm. The enzyme catalyses [ThiS sulfur-carrier protein]-C-terminal-Gly-aminoethanethioate + 2-iminoacetate + 1-deoxy-D-xylulose 5-phosphate = [ThiS sulfur-carrier protein]-C-terminal Gly-Gly + 2-[(2R,5Z)-2-carboxy-4-methylthiazol-5(2H)-ylidene]ethyl phosphate + 2 H2O + H(+). Its pathway is cofactor biosynthesis; thiamine diphosphate biosynthesis. Catalyzes the rearrangement of 1-deoxy-D-xylulose 5-phosphate (DXP) to produce the thiazole phosphate moiety of thiamine. Sulfur is provided by the thiocarboxylate moiety of the carrier protein ThiS. In vitro, sulfur can be provided by H(2)S. This Prochlorococcus marinus (strain MIT 9215) protein is Thiazole synthase.